The sequence spans 67 residues: U-myrmeciitoxin(01)-Mg4a (67 aa).

Positions 1-25 (MGKVFFFVLMIAIIGSTFLIEEALG) are cleaved as a signal peptide.

This sequence belongs to the ant myrmeciitoxin-01 family. In terms of assembly, homodimer; disulfide-linked. Post-translationally, contains 2 intrachain disulfide bonds (one per chain) and 1 interchain disulfide bond. In terms of tissue distribution, expressed by the venom gland.

It localises to the secreted. This is U-myrmeciitoxin(01)-Mg4a from Myrmecia gulosa (Red bulldog ant).